The primary structure comprises 1073 residues: Receptor-type guanylate cyclase gcy-23 (1073 aa).

The signal sequence occupies residues 1–15 (MRRELFIFLLLLGEC). Residues 16–458 (ANVKVKVGHI…FRNEKCDYTT (443 aa)) lie on the Extracellular side of the membrane. Asn336 carries N-linked (GlcNAc...) asparagine glycosylation. A helical transmembrane segment spans residues 459-479 (LIIGGCIVLLIILLIICFFIL). The Cytoplasmic portion of the chain corresponds to 480-1073 (SRVCENRALA…QQQNFSQLGI (594 aa)). In terms of domain architecture, Protein kinase spans 508 to 808 (MKSMLSIGSS…RVRLNTENYL (301 aa)). Residues 813–844 (SLVDQMMRMMEQYANNLEKLVAERTGMLEEAN) adopt a coiled-coil conformation. Residues 878–1008 (TVMFSDIVGF…DTVNVASRME (131 aa)) enclose the Guanylate cyclase domain. 3 residues coordinate Mg(2+): Asp883, Ile884, and Asp927.

This sequence belongs to the adenylyl cyclase class-4/guanylyl cyclase family. In terms of tissue distribution, expressed specifically in AFD sensory neurons.

It is found in the cell membrane. The protein localises to the cell projection. The protein resides in the cilium. The catalysed reaction is GTP = 3',5'-cyclic GMP + diphosphate. Its function is as follows. Guanylate cyclase involved in the production of the second messenger cGMP. Regulates thermotaxis responses in AFD sensory neurons. May regulate AFD neuronal activity such as calcium responses to temperature gradients. This Caenorhabditis elegans protein is Receptor-type guanylate cyclase gcy-23.